A 396-amino-acid chain; its full sequence is D-alanine--D-alanine ligase (396 aa).

In terms of domain architecture, ATP-grasp spans 141 to 347 (KMLWQAAGLP…PQDLMAQLLS (207 aa)). 174 to 229 (ETRLGYPLFVKPAQAGSSVGASAVQTRAPLIPAIEAAFQWDEVVLVERYVRAREIE) lines the ATP pocket. Residues aspartate 301, glutamate 314, and asparagine 316 each contribute to the Mg(2+) site. A disordered region spans residues 374 to 396 (AAHDPDAQGDDWDQRDSNPLPTA).

This sequence belongs to the D-alanine--D-alanine ligase family. Mg(2+) serves as cofactor. Requires Mn(2+) as cofactor.

Its subcellular location is the cytoplasm. It carries out the reaction 2 D-alanine + ATP = D-alanyl-D-alanine + ADP + phosphate + H(+). Its pathway is cell wall biogenesis; peptidoglycan biosynthesis. Its function is as follows. Cell wall formation. The polypeptide is D-alanine--D-alanine ligase (Treponema pallidum (strain Nichols)).